The chain runs to 498 residues: Calcitonin receptor (498 aa).

An N-terminal signal peptide occupies residues 1–29 (MRFTLTRWCLTLFIFLNRPLPVLPDSADG). The Extracellular portion of the chain corresponds to 30-147 (AHTPTLEPEP…FTPDKLQNAY (118 aa)). Disulfide bonds link C56–C82, C73–C113, and C96–C135. N74, N126, and N131 each carry an N-linked (GlcNAc...) asparagine glycan. Residues 148–170 (ILYYLAIVGHSLSILTLLISLGI) form a helical membrane-spanning segment. The Cytoplasmic segment spans residues 171–198 (FMFLRYFNLLAPFNALLYPTRSISCQRV). Residues 199–219 (TLHKNMFLTYVLNSIIIIVHL) traverse the membrane as a helical segment. The Extracellular portion of the chain corresponds to 220–236 (VVIVPNGELVKRDPPIC). Cysteines 236 and 306 form a disulfide. A helical membrane pass occupies residues 237-259 (KVLHFFHQYMMSCNYFWMLCEGV). At 260–276 (YLHTLIVVSVFAEGQRL) the chain is on the cytoplasmic side. The chain crosses the membrane as a helical span at residues 277-297 (WWYHVLGWGFPLIPTTAHAIT). The Extracellular segment spans residues 298 to 313 (RAVLFNDNCWLSVDTN). The helical transmembrane segment at 314 to 337 (LLYIIHGPVMAALVVNFFFLLNIL) threads the bilayer. The Cytoplasmic segment spans residues 338–357 (RVLVKKLKESQEAESHMYLK). Residues 358 to 376 (AVRATLILVPLLGVQFVVL) form a helical membrane-spanning segment. Over 377 to 384 (PWRPSTPL) the chain is Extracellular. Residues 385 to 411 (LGKIYDYVVHSLIHFQGFFVAIIYCFC) traverse the membrane as a helical segment. Residues 412–498 (NHEVQGALKR…MEVLEQETSA (87 aa)) lie on the Cytoplasmic side of the membrane.

The protein belongs to the G-protein coupled receptor 2 family. As to quaternary structure, heterodimer of CALCR and RAMP1, RAMP2 or RAMP3; the receptor complexes function as AMYR1, AMYR2 and AMYR3 receptors, respectively, and respond to amylin/IAPP, calcitonin/CT and CGRP1 ligands. Interacts with GPRASP2.

The protein localises to the cell membrane. In terms of biological role, g protein-coupled receptor activated by ligand peptides amylin (IAPP), calcitonin (CT/CALCA) and calcitonin gene-related peptide type 1 (CGRP1/CALCA). CALCR interacts with receptor-activity-modifying proteins RAMP1, 2 and 3 to form receptor complexes AMYR1, 2 and 3, respectively. IAPP, CT and CGRP1 activate CALCR and AMYRs with distinct modes of receptor activation resulting in specific phenotypes. Ligand binding causes a conformation change that triggers signaling via guanine nucleotide-binding proteins (G proteins) and modulates the activity of downstream effectors. Activates cAMP-dependent pathway. The protein is Calcitonin receptor of Sus scrofa (Pig).